Reading from the N-terminus, the 20-residue chain is Cytochrome P450 2A7 (20 aa).

It belongs to the cytochrome P450 family. It depends on heme as a cofactor.

The protein localises to the endoplasmic reticulum membrane. It is found in the microsome membrane. The enzyme catalyses an organic molecule + reduced [NADPH--hemoprotein reductase] + O2 = an alcohol + oxidized [NADPH--hemoprotein reductase] + H2O + H(+). Exhibits a high coumarin 7-hydroxylase activity. The chain is Cytochrome P450 2A7 (CYP2A7) from Papio sp. (Baboon).